Here is a 270-residue protein sequence, read N- to C-terminus: 3-methyl-2-oxobutanoate hydroxymethyltransferase (270 aa).

Mg(2+)-binding residues include Asp50 and Asp89. 3-methyl-2-oxobutanoate contacts are provided by residues 50–51 (DS), Asp89, and Lys118. A Mg(2+)-binding site is contributed by Glu120. Glu187 functions as the Proton acceptor in the catalytic mechanism.

This sequence belongs to the PanB family. As to quaternary structure, homodecamer; pentamer of dimers. Mg(2+) is required as a cofactor.

It is found in the cytoplasm. The enzyme catalyses 3-methyl-2-oxobutanoate + (6R)-5,10-methylene-5,6,7,8-tetrahydrofolate + H2O = 2-dehydropantoate + (6S)-5,6,7,8-tetrahydrofolate. It participates in cofactor biosynthesis; (R)-pantothenate biosynthesis; (R)-pantoate from 3-methyl-2-oxobutanoate: step 1/2. In terms of biological role, catalyzes the reversible reaction in which hydroxymethyl group from 5,10-methylenetetrahydrofolate is transferred onto alpha-ketoisovalerate to form ketopantoate. The sequence is that of 3-methyl-2-oxobutanoate hydroxymethyltransferase from Helicobacter pylori (strain G27).